The chain runs to 857 residues: Aminopeptidase N (857 aa).

Residues E130 and G264–N268 contribute to the substrate site. H298 lines the Zn(2+) pocket. Catalysis depends on E299, which acts as the Proton acceptor. The Zn(2+) site is built by H302 and E321.

Belongs to the peptidase M1 family. In terms of assembly, monomer. Zn(2+) is required as a cofactor. In terms of processing, the N-terminus is blocked.

It is found in the cytoplasm. The enzyme catalyses Release of an N-terminal amino acid, Xaa-|-Yaa- from a peptide, amide or arylamide. Xaa is preferably Ala, but may be most amino acids including Pro (slow action). When a terminal hydrophobic residue is followed by a prolyl residue, the two may be released as an intact Xaa-Pro dipeptide.. Functionally, aminopeptidase with broad substrate specificity to several peptides. Shows strong preference for leucine but also cleaves next to Arg and Lys in peptide-bond-containing substrates. In Streptomyces lividans, this protein is Aminopeptidase N (pepN).